A 228-amino-acid polypeptide reads, in one-letter code: MSITNWPACERPREKLQECGAAALSDAELLAVFLRVGATGKSAVELARDLMVRFGSLTRLFTADARAVLGIRGMGEAKYTQLQAVPELARRMLAESLELPSGLDSPAAVRSYLRLTLAPLAQEVFVCLFLDTRNRMIASEELFRGTLNQTAVYPREVARRALAHNAASVIVAHNHPSGCCTPSQSDLQMTRMLARALDLIDVRLLDHFVVAGTHVHSFAEHGELKTAT.

The MPN domain maps to 102–224 (GLDSPAAVRS…VHSFAEHGEL (123 aa)). Zn(2+) is bound by residues His-173, His-175, and Asp-186. The JAMM motif motif lies at 173 to 186 (HNHPSGCCTPSQSD).

Belongs to the UPF0758 family.

The chain is UPF0758 protein Reut_A2732 from Cupriavidus pinatubonensis (strain JMP 134 / LMG 1197) (Cupriavidus necator (strain JMP 134)).